The sequence spans 217 residues: Small ribosomal subunit protein uS3 (217 aa).

Residues 38 to 106 enclose the KH type-2 domain; it reads IRNFIKKELA…QVHINIIEIK (69 aa).

It belongs to the universal ribosomal protein uS3 family. In terms of assembly, part of the 30S ribosomal subunit. Forms a tight complex with proteins S10 and S14.

Its function is as follows. Binds the lower part of the 30S subunit head. Binds mRNA in the 70S ribosome, positioning it for translation. In Streptococcus suis (strain 98HAH33), this protein is Small ribosomal subunit protein uS3.